We begin with the raw amino-acid sequence, 163 residues long: Type VII secretion system protein EsaG (163 aa).

In terms of assembly, interacts with EssD (via C-terminus). Interacts with EssE.

The protein resides in the cytoplasm. In terms of biological role, component of the type VII secretion system (Ess). Also acts as part of toxin-antitoxin system. Counteracts the toxic effect of EssD via direct interaction. The sequence is that of Type VII secretion system protein EsaG from Staphylococcus aureus (strain NCTC 8325 / PS 47).